Consider the following 306-residue polypeptide: Protein YIPF1 (306 aa).

Over 1-119 the chain is Cytoplasmic; sequence MAAVDDLQFE…VRLYIRSNPD (119 aa). The segment at 14–62 is disordered; sequence NAATSLTANPDATTVNIEDPGETPKHQSGSPRGSGREEDDELLGNDDSD. The segment covering 15-29 has biased composition (polar residues); sequence AATSLTANPDATTVN. A compositionally biased stretch (acidic residues) spans 50–59; it reads EEDDELLGND. A helical membrane pass occupies residues 120-140; sequence LYGPFWICATLVFAIAISGNL. At 141-162 the chain is on the lumenal side; that stretch reads SNFLIHLGEKTYRYVPEFRKVS. The helical transmembrane segment at 163–183 threads the bilayer; the sequence is IAATTIYAYAWLVPLALWGFL. The Cytoplasmic portion of the chain corresponds to 184–200; that stretch reads MWRNSKVMNIVSYSFLE. A helical membrane pass occupies residues 201-221; that stretch reads IVCVYGYSLFIYIPTAILWII. Residues 222–227 lie on the Lumenal side of the membrane; sequence PQKAVR. Residues 228–248 form a helical membrane-spanning segment; it reads WILVMIALGISGSVLAMTFWP. The Cytoplasmic segment spans residues 249–256; the sequence is AVREDNRR. The helical transmembrane segment at 257–277 threads the bilayer; the sequence is VALATIVTIVLLHMLLSVGCL. The Lumenal portion of the chain corresponds to 278-306; that stretch reads AYFFDAPEMDHLPTTTATPNQTVAAAKSS. An N-linked (GlcNAc...) asparagine glycan is attached at N297.

It belongs to the YIP1 family. Interacts with YIPF6; this interaction may stabilize YIPF1. May also form a ternary complex with YIPF2 and YIPF6.

It is found in the golgi apparatus. The protein localises to the cis-Golgi network membrane. Its subcellular location is the trans-Golgi network membrane. The protein resides in the late endosome membrane. This Pongo abelii (Sumatran orangutan) protein is Protein YIPF1 (YIPF1).